The chain runs to 176 residues: Protein GrpE (176 aa).

This sequence belongs to the GrpE family. Homodimer.

Its subcellular location is the cytoplasm. Its function is as follows. Participates actively in the response to hyperosmotic and heat shock by preventing the aggregation of stress-denatured proteins, in association with DnaK and GrpE. It is the nucleotide exchange factor for DnaK and may function as a thermosensor. Unfolded proteins bind initially to DnaJ; upon interaction with the DnaJ-bound protein, DnaK hydrolyzes its bound ATP, resulting in the formation of a stable complex. GrpE releases ADP from DnaK; ATP binding to DnaK triggers the release of the substrate protein, thus completing the reaction cycle. Several rounds of ATP-dependent interactions between DnaJ, DnaK and GrpE are required for fully efficient folding. The polypeptide is Protein GrpE (Thermoplasma volcanium (strain ATCC 51530 / DSM 4299 / JCM 9571 / NBRC 15438 / GSS1)).